Here is a 220-residue protein sequence, read N- to C-terminus: UPF0319 protein YccT (220 aa).

The N-terminal stretch at 1-20 (MKTGALTTFLALCLPVTVFA) is a signal peptide.

The protein belongs to the UPF0319 family.

This is UPF0319 protein YccT from Salmonella schwarzengrund (strain CVM19633).